The sequence spans 481 residues: Glutamate--tRNA ligase (481 aa).

The 'HIGH' region signature appears at 11–21 (PSPTGLLHIGN). A 'KMSKS' region motif is present at residues 255–259 (KLSKR). Position 258 (K258) interacts with ATP.

It belongs to the class-I aminoacyl-tRNA synthetase family. Glutamate--tRNA ligase type 1 subfamily. As to quaternary structure, monomer.

The protein localises to the cytoplasm. It catalyses the reaction tRNA(Glu) + L-glutamate + ATP = L-glutamyl-tRNA(Glu) + AMP + diphosphate. Its function is as follows. Catalyzes the attachment of glutamate to tRNA(Glu) in a two-step reaction: glutamate is first activated by ATP to form Glu-AMP and then transferred to the acceptor end of tRNA(Glu). The polypeptide is Glutamate--tRNA ligase (Streptococcus pyogenes serotype M4 (strain MGAS10750)).